An 802-amino-acid polypeptide reads, in one-letter code: Leucine--tRNA ligase (802 aa).

The 'HIGH' region motif lies at 40-51; it reads PYPSGAGLHVGH. The short motif at 576–580 is the 'KMSKS' region element; it reads KMSKS. An ATP-binding site is contributed by lysine 579.

Belongs to the class-I aminoacyl-tRNA synthetase family.

The protein localises to the cytoplasm. It carries out the reaction tRNA(Leu) + L-leucine + ATP = L-leucyl-tRNA(Leu) + AMP + diphosphate. This is Leucine--tRNA ligase from Bacillus cereus (strain G9842).